A 273-amino-acid polypeptide reads, in one-letter code: Fos-related antigen 1 (273 aa).

2 disordered regions span residues 1 to 46 (MYRD…IDSS) and 60 to 114 (GPTG…RRER). The span at 7–35 (EPGPSSGAGSPYGRPAQPPQAQAQTAQQQ) shows a compositional bias: low complexity. Residues 105-168 (EERRRVRRER…ERLELVLEAH (64 aa)) form the bZIP domain. The basic motif stretch occupies residues 107-127 (RRRVRRERNKLAAAKCRNRRK). The interval 133–161 (LQAETDKLEDEKSGLQREIEELQKQKERL) is leucine-zipper. Basic and acidic residues predominate over residues 169–182 (RPICKIPEGDKKDP). The tract at residues 169-273 (RPICKIPEGD…PLGSPTLLAL (105 aa)) is disordered. 2 stretches are compositionally biased toward low complexity: residues 217–235 (LHTP…TPSL) and 254–273 (SSSS…LLAL). S267 carries the phosphoserine modification.

The protein belongs to the bZIP family. Fos subfamily. In terms of assembly, heterodimer. Interacts with the BAF multiprotein chromatin-remodeling complex subunits SMARCB1 and SMARCD1. Interacts with ARID1A and JUN.

The protein resides in the nucleus. The chain is Fos-related antigen 1 (Fosl1) from Mus musculus (Mouse).